Reading from the N-terminus, the 89-residue chain is Small ribosomal subunit protein uS15 (89 aa).

The protein belongs to the universal ribosomal protein uS15 family. Part of the 30S ribosomal subunit. Forms a bridge to the 50S subunit in the 70S ribosome, contacting the 23S rRNA.

In terms of biological role, one of the primary rRNA binding proteins, it binds directly to 16S rRNA where it helps nucleate assembly of the platform of the 30S subunit by binding and bridging several RNA helices of the 16S rRNA. Functionally, forms an intersubunit bridge (bridge B4) with the 23S rRNA of the 50S subunit in the ribosome. The chain is Small ribosomal subunit protein uS15 from Anaeromyxobacter sp. (strain Fw109-5).